The following is a 289-amino-acid chain: Somatostatin-like receptor F_48D10.1 (289 aa).

The Extracellular portion of the chain corresponds to 1–57 (MEPLDQTPGFPLSPEPNYWYETTPSLLLVSYPHLLDISSNQSTQSVPFQGSSALLTA). N40 is a glycosylation site (N-linked (GlcNAc...) asparagine). A helical membrane pass occupies residues 58–79 (VIYITVFVVGLTGNTLAIYVVL). The Cytoplasmic portion of the chain corresponds to 80 to 89 (RYAGMKTVTN). A helical transmembrane segment spans residues 90 to 110 (IYILNLAVADELYIVGLPFLA). Over 111-126 (TQNVLSYWPFGSFLCR) the chain is Extracellular. C125 and C221 form a disulfide bridge. A helical membrane pass occupies residues 127-148 (VVMTADSMNQFTSIFCLTVMSI). Topologically, residues 149–170 (DRYLAVVHPIRSTKWRHPRVAK) are cytoplasmic. Residues 171 to 191 (VVSAAVWAVSFVVVLPVVIFS) traverse the membrane as a helical segment. The Extracellular segment spans residues 192–240 (DVQVRPSRPLQVGTSSKCLVKRVQETFNSCNMIWPEPKNVWSTAFILYT). The helical transmembrane segment at 241 to 261 (AMVGFFGPLLIICLCYLLIVI) threads the bilayer. Residues 262 to 289 (KVRHRMSAAQVGAVVSTCPLNICCLSRR) lie on the Cytoplasmic side of the membrane.

The protein belongs to the G-protein coupled receptor 1 family.

It localises to the cell membrane. The sequence is that of Somatostatin-like receptor F_48D10.1 from Takifugu rubripes (Japanese pufferfish).